The primary structure comprises 162 residues: ATP synthase subunit b (162 aa).

The chain crosses the membrane as a helical span at residues 2–22 (LEFNATLLAQIVDFIILLIFL).

The protein belongs to the ATPase B chain family. As to quaternary structure, F-type ATPases have 2 components, F(1) - the catalytic core - and F(0) - the membrane proton channel. F(1) has five subunits: alpha(3), beta(3), gamma(1), delta(1), epsilon(1). F(0) has three main subunits: a(1), b(2) and c(10-14). The alpha and beta chains form an alternating ring which encloses part of the gamma chain. F(1) is attached to F(0) by a central stalk formed by the gamma and epsilon chains, while a peripheral stalk is formed by the delta and b chains.

It localises to the cell membrane. F(1)F(0) ATP synthase produces ATP from ADP in the presence of a proton or sodium gradient. F-type ATPases consist of two structural domains, F(1) containing the extramembraneous catalytic core and F(0) containing the membrane proton channel, linked together by a central stalk and a peripheral stalk. During catalysis, ATP synthesis in the catalytic domain of F(1) is coupled via a rotary mechanism of the central stalk subunits to proton translocation. Its function is as follows. Component of the F(0) channel, it forms part of the peripheral stalk, linking F(1) to F(0). This chain is ATP synthase subunit b, found in Pelotomaculum thermopropionicum (strain DSM 13744 / JCM 10971 / SI).